Here is a 176-residue protein sequence, read N- to C-terminus: NAD(P)H-quinone oxidoreductase subunit 6, chloroplastic (176 aa).

5 helical membrane passes run 10–30, 32–52, 63–83, 92–112, and 152–172; these read FLLV…VLLT, PIFS…FYIL, LLIY…FMNS, LWTV…VSLV, and FFLP…GTIV.

This sequence belongs to the complex I subunit 6 family. NDH is composed of at least 16 different subunits, 5 of which are encoded in the nucleus.

It localises to the plastid. The protein localises to the chloroplast thylakoid membrane. The enzyme catalyses a plastoquinone + NADH + (n+1) H(+)(in) = a plastoquinol + NAD(+) + n H(+)(out). It catalyses the reaction a plastoquinone + NADPH + (n+1) H(+)(in) = a plastoquinol + NADP(+) + n H(+)(out). NDH shuttles electrons from NAD(P)H:plastoquinone, via FMN and iron-sulfur (Fe-S) centers, to quinones in the photosynthetic chain and possibly in a chloroplast respiratory chain. The immediate electron acceptor for the enzyme in this species is believed to be plastoquinone. Couples the redox reaction to proton translocation, and thus conserves the redox energy in a proton gradient. The polypeptide is NAD(P)H-quinone oxidoreductase subunit 6, chloroplastic (ndhG) (Cicer arietinum (Chickpea)).